The primary structure comprises 59 residues: Ferredoxin (59 aa).

2 4Fe-4S ferredoxin-type domains span residues 2-30 and 31-59; these read GKIT…LEVN and DHVE…LKVE. Positions 12, 15, 18, 22, 41, 44, 47, and 51 each coordinate [4Fe-4S] cluster.

Requires [4Fe-4S] cluster as cofactor.

In terms of biological role, ferredoxins are iron-sulfur proteins that transfer electrons in a wide variety of metabolic reactions. In Entamoeba histolytica (strain ATCC 30459 / HM-1:IMSS / ABRM), this protein is Ferredoxin.